A 240-amino-acid polypeptide reads, in one-letter code: Probable transcriptional regulator ycf27 (240 aa).

Positions 5 to 118 (KILVIDDEAS…ELEARIRSVL (114 aa)) constitute a Response regulatory domain. Asp54 carries the post-translational modification 4-aspartylphosphate. Positions 74 to 92 (DVPIIMLTALSDVSDRITG) form a DNA-binding region, H-T-H motif. Residues 133–234 (SGIINIGFLK…ARGTGYLFQR (102 aa)) constitute a DNA-binding region (ompR/PhoB-type).

It localises to the plastid. The protein resides in the chloroplast. Its function is as follows. Probable promoter-specific protein mediating the interaction between DNA and RNA polymerase. The sequence is that of Probable transcriptional regulator ycf27 (ycf27) from Porphyridium aerugineum (Red microalga).